Reading from the N-terminus, the 302-residue chain is tRNA pseudouridine synthase B (302 aa).

The active-site Nucleophile is the aspartate 45.

Belongs to the pseudouridine synthase TruB family. Type 1 subfamily.

It carries out the reaction uridine(55) in tRNA = pseudouridine(55) in tRNA. Responsible for synthesis of pseudouridine from uracil-55 in the psi GC loop of transfer RNAs. The protein is tRNA pseudouridine synthase B of Francisella tularensis subsp. tularensis (strain FSC 198).